The sequence spans 125 residues: Apolipoprotein C-IV (125 aa).

The N-terminal stretch at 1–27 is a signal peptide; sequence MSLLRQRLQALPVLCLCVLVLACIGAC.

It belongs to the apolipoprotein C4 family.

Its subcellular location is the secreted. In terms of biological role, may participate in lipoprotein metabolism. The sequence is that of Apolipoprotein C-IV (APOC4) from Plecturocebus moloch (Dusky titi monkey).